The primary structure comprises 155 residues: MSRRSTAEKKTAKSDPIYHNRLVNMVVNRILKNGKKSLAYRILYRAIKNIQQKTEKNPLSVLRQAIRRVTPNVTVKARRVGGSTYRVPVEIRSTQGKVLAIRWLLGASRKRPGRNMDFKLSHELMDAARGNGNAIRKKEETHRMAXANXAFAHFR.

The protein belongs to the universal ribosomal protein uS7 family. Part of the 30S ribosomal subunit.

The protein localises to the plastid. It is found in the chloroplast. In terms of biological role, one of the primary rRNA binding proteins, it binds directly to 16S rRNA where it nucleates assembly of the head domain of the 30S subunit. The sequence is that of Small ribosomal subunit protein uS7c (rps7) from Cedrus deodara (Deodar cedar).